The chain runs to 626 residues: Chaperone protein HtpG (626 aa).

The a; substrate-binding stretch occupies residues 1–341; it reads MIKKEFKAES…SEDLSLNISR (341 aa). Positions 342-552 are b; sequence EMLQHDRQLK…DGDVTIEMEK (211 aa). Positions 553 to 626 are c; that stretch reads ILSAMPNNQE…FTNDICKLMS (74 aa).

This sequence belongs to the heat shock protein 90 family. As to quaternary structure, homodimer.

The protein localises to the cytoplasm. Functionally, molecular chaperone. Has ATPase activity. In Alkaliphilus metalliredigens (strain QYMF), this protein is Chaperone protein HtpG.